Consider the following 433-residue polypeptide: Steroid hormone receptor ERR2 (433 aa).

The disordered stretch occupies residues 1-38; that stretch reads MSSDDRHLGSSCGSFIKTEPSSPSSGIDALSHHSPSGS. Positions 28-38 are enriched in low complexity; it reads DALSHHSPSGS. An interaction with NANOG region spans residues 93–211; it reads YMLNAIPKRL…SPPAKKPLTK (119 aa). The segment at residues 100–186 is a DNA-binding region (nuclear receptor); sequence KRLCLVCGDI…RVRGGRQKYK (87 aa). NR C4-type zinc fingers lie at residues 103 to 123 and 139 to 163; these read CLVCGDIASGYHYGVASCEAC and CPATNECEITKRRRKSCQACRFMKC. An essential for ESRRB transcriptional activity and interaction with NCOA3 region spans residues 203-433; it reads PPAKKPLTKI…LFLEMLEAKV (231 aa). The region spanning 208 to 432 is the NR LBD domain; the sequence is PLTKIVSYLL…KLFLEMLEAK (225 aa).

Belongs to the nuclear hormone receptor family. NR3 subfamily. In terms of assembly, binds DNA as a monomer. Interacts with NR0B1; represses ESRRB activity at the GATA6 promoter. Interacts with NANOG; reciprocally modulates their transcriptional activities and activates POU5F1 expression. Interacts with NCOA3; mediates the interaction between ESRRB and RNA polymerase II complexes and allows NCOA3 corecruitment to ESRRB, KLF4, NANOG, and SOX2 enhancer regions to trigger ESRRB-dependent gene activation involved in self-renewal and pluripotency. Interacts with KDM1A; co-occupes the core set of ESRRB targets including ELF5 and EOMES. Interacts with the multiprotein complex Integrator, at least composed of INTS1, INTS2, INTS3, INTS4, INTS5, INTS6, INTS7, INTS8, INTS9/RC74, INTS10, INTS11/CPSF3L and INTS12; ESRRB is probably not a core component of the integrator complex and associates to integrator via its interaction with INTS1 and INTS9; attracts the transcriptional machinery. Interacts with JARID2. Interacts with POU5F1; recruits ESRRB near the POU5F1-SOX2 element in the NANOG proximal promoter leading to activation of NANOG expression; the interaction is DNA independent. Interacts with NFE2L2; represses NFE2L2 transcriptional activity. Isoform 1 interacts with ESR1. Acetylated by PCAF/KAT2 (in vitro).

It localises to the nucleus. The protein resides in the cytoplasm. The protein localises to the chromosome. Functionally, transcription factor that binds a canonical ESRRB recognition (ERRE) sequence 5'TCAAGGTCA-3' localized on promoter and enhancer of targets genes regulating their expression or their transcription activity. Plays a role, in a LIF-independent manner, in maintainance of self-renewal and pluripotency of embryonic and trophoblast stem cells through different signaling pathways including FGF signaling pathway and Wnt signaling pathways. Involved in morula development (2-16 cells embryos) by acting as a regulator at the 8-cell stage. Upon FGF signaling pathway activation, interacts with KDM1A by directly binding to enhancer site of ELF5 and EOMES and activating their transcription leading to self-renewal of trophoblast stem cells. Also regulates expression of multiple rod-specific genes and is required for survival of this cell type. Plays a role as transcription factor activator of GATA6, NR0B1, POU5F1 and PERM1. Plays a role as transcription factor repressor of NFE2L2 transcriptional activity and ESR1 transcriptional activity. During mitosis remains bound to a subset of interphase target genes, including pluripotency regulators, through the canonical ESRRB recognition (ERRE) sequence, leading to their transcriptional activation in early G1 phase. Can coassemble on structured DNA elements with other transcription factors like SOX2, POU5F1, KDM1A and NCOA3 to trigger ESRRB-dependent gene activation. This mechanism, in the case of SOX2 corecruitment prevents the embryonic stem cells (ESCs) to epiblast stem cells (EpiSC) transition through positive regulation of NR0B1 that inhibits the EpiSC transcriptional program. Also plays a role inner ear development by controlling expression of ion channels and transporters and in early placentation. Its function is as follows. Transcription factor that binds a canonical ESRRB recognition (ERRE) sequence 5'TCAAGGTCA-3' localized on promoter and enhancer of targets genes regulating their expression or their transcription activity. Positively regulates ESR1 transcriptional activity upon E2 stimulation. In Homo sapiens (Human), this protein is Steroid hormone receptor ERR2.